A 218-amino-acid polypeptide reads, in one-letter code: Large ribosomal subunit protein uL4 (218 aa).

Residues 46 to 102 (ARQGTHSTKTRGEVRGGGRKPFRQKGTGRARQGSIRAPHFTGGGISHGPKPRDYSQR) form a disordered region. The span at 62-73 (GGRKPFRQKGTG) shows a compositional bias: basic residues.

The protein belongs to the universal ribosomal protein uL4 family. In terms of assembly, part of the 50S ribosomal subunit.

Its function is as follows. One of the primary rRNA binding proteins, this protein initially binds near the 5'-end of the 23S rRNA. It is important during the early stages of 50S assembly. It makes multiple contacts with different domains of the 23S rRNA in the assembled 50S subunit and ribosome. In terms of biological role, forms part of the polypeptide exit tunnel. The chain is Large ribosomal subunit protein uL4 from Corynebacterium glutamicum (strain R).